A 397-amino-acid polypeptide reads, in one-letter code: Cephalotocin receptor 1 (397 aa).

At 1–48 (MRYITTHPNEISTQIWNNFSSTEIWSNFSAAKNETQPIRRNQDLANAE) the chain is on the extracellular side. N-linked (GlcNAc...) asparagine glycans are attached at residues asparagine 18, asparagine 27, and asparagine 33. A helical membrane pass occupies residues 49–69 (VITLAVVIIITVIGNSIVLIT). Residues 70 to 91 (LFQRRKKLTRMHLFILHLSVTD) lie on the Cytoplasmic side of the membrane. A helical membrane pass occupies residues 92-112 (LFVAFFNNLPQMIWDITFLFL). Topologically, residues 113–120 (GTDLLCRL) are extracellular. Cysteines 118 and 194 form a disulfide. The chain crosses the membrane as a helical span at residues 121 to 141 (VTYLQSVAMYASSYVLVATAI). Topologically, residues 142–162 (DRYFAICHPLSSHKWTTARVH) are cytoplasmic. A helical membrane pass occupies residues 163–183 (VMVFIAWMLSFLFSTPQLFIW). Residues 184–205 (SMQFSNIGLTCQATFDPEWTLK) are Extracellular-facing. A helical membrane pass occupies residues 206 to 226 (FYITWLTVAIWILPTIALTLF). Residues 227-293 (YGMMCFAVWK…RGISRAKVRS (67 aa)) lie on the Cytoplasmic side of the membrane. A helical membrane pass occupies residues 294–314 (VALTLSVVACCFICWSPFFVC). At 315-331 (QMWAAWDENAPYSGAIY) the chain is on the extracellular side. Residues 332 to 352 (TILLLLSSLNSCTNPWIYMIF) traverse the membrane as a helical segment. Topologically, residues 353–397 (SVFQHRAKTSRFVNDEETTSVTVLSSRNDIRLMSMKKKLEQTARN) are cytoplasmic.

Belongs to the G-protein coupled receptor 1 family. Vasopressin/oxytocin receptor subfamily. Present in brain, buccal ganglion, gastric ganglion, olfactory lube, peduncle lobe, optical lobe, pancreas, the oviduct and the ovary.

Its subcellular location is the cell membrane. Acts as a receptor for cephalotocin. This chain is Cephalotocin receptor 1, found in Octopus vulgaris (Common octopus).